The chain runs to 107 residues: Protein KleE (107 aa).

The chain is Protein KleE (kleE) from Escherichia coli.